Reading from the N-terminus, the 341-residue chain is Mitochondrial glutathione transporter SLC25A40 (341 aa).

Solcar repeat units follow at residues Ile-14–Ile-132, Arg-140–Ser-224, and Pro-234–Phe-328. 6 helical membrane-spanning segments follow: residues Met-20–Val-40, Leu-104–Thr-124, Ile-143–Leu-163, Trp-200–Val-221, Phe-236–Pro-256, and Gly-299–Ile-319.

Belongs to the mitochondrial carrier (TC 2.A.29) family.

The protein resides in the mitochondrion inner membrane. It catalyses the reaction glutathione(in) = glutathione(out). Functionally, probable mitochondrial transporter required for glutathione import into mitochondria. Glutathione, which plays key roles in oxidative metabolism, is produced exclusively in the cytosol and is imported in many organelles. Mitochondrial glutathione is required for the activity and stability of proteins containing iron-sulfur clusters. The chain is Mitochondrial glutathione transporter SLC25A40 from Xenopus tropicalis (Western clawed frog).